A 280-amino-acid polypeptide reads, in one-letter code: uncharacterized protein (280 aa).

6 helical membrane-spanning segments follow: residues 3-23 (ILIT…GMYI), 52-72 (FGLF…GSIV), 81-101 (INGL…NLQI), 123-143 (NWLV…LILL), 196-216 (FADI…IIIG), and 233-253 (IFAC…LLHI).

Its subcellular location is the cell membrane. This is an uncharacterized protein from Rickettsia prowazekii (strain Madrid E).